The sequence spans 338 residues: Phosphate acyltransferase (338 aa).

This sequence belongs to the PlsX family. In terms of assembly, homodimer. Probably interacts with PlsY.

It is found in the cytoplasm. The enzyme catalyses a fatty acyl-[ACP] + phosphate = an acyl phosphate + holo-[ACP]. It functions in the pathway lipid metabolism; phospholipid metabolism. Its function is as follows. Catalyzes the reversible formation of acyl-phosphate (acyl-PO(4)) from acyl-[acyl-carrier-protein] (acyl-ACP). This enzyme utilizes acyl-ACP as fatty acyl donor, but not acyl-CoA. This Salinibacter ruber (strain DSM 13855 / M31) protein is Phosphate acyltransferase.